Consider the following 158-residue polypeptide: HVA22-like protein f (158 aa).

3 helical membrane passes run 2–22, 41–61, and 63–83; these read GFIIAIAKRFDALVGPGVMLL, QQWLTYWIIYSLITIFELSVW, and VLAWLPFWPYLKLLFCMWLVL.

It belongs to the DP1 family.

Its subcellular location is the membrane. The polypeptide is HVA22-like protein f (HVA22F) (Arabidopsis thaliana (Mouse-ear cress)).